The chain runs to 129 residues: Selenoprotein M (129 aa).

The first 19 residues, 1–19, serve as a signal peptide directing secretion; it reads MARGLAVFFLLAGACLALA. Residues cysteine 35 and selenocysteine 38 each act as nucleophile in the active site. A non-standard amino acid (selenocysteine) is located at residue selenocysteine 38. The segment at 107 to 129 is disordered; the sequence is KSSKDEQVPEEYQEGPYMEKEEL. A Prevents secretion from ER motif is present at residues 126 to 129; the sequence is KEEL.

It belongs to the selenoprotein M/F family. High expression levels observed in hepatopancreas, testis, ovaries and intestine. Also expressed in heart, stomach, gills, cranial ganglia, muscle and hematocytes.

It is found in the endoplasmic reticulum. Its function is as follows. May function as a thiol-disulfide oxidoreductase that participates in disulfide bond formation. Involved in the regulation of reproduction during the period of rapid gonadal development. In Eriocheir sinensis (Chinese mitten crab), this protein is Selenoprotein M.